Here is a 255-residue protein sequence, read N- to C-terminus: 6-phosphogluconolactonase 4 (255 aa).

It belongs to the glucosamine/galactosamine-6-phosphate isomerase family. 6-phosphogluconolactonase subfamily.

It localises to the cytoplasm. The enzyme catalyses 6-phospho-D-glucono-1,5-lactone + H2O = 6-phospho-D-gluconate + H(+). It participates in carbohydrate degradation; pentose phosphate pathway; D-ribulose 5-phosphate from D-glucose 6-phosphate (oxidative stage): step 2/3. Its function is as follows. Involved in the pentose phosphate pathway via hydrolysis of 6-phosphogluconolactone to 6-phosphogluconate. In Saccharomyces cerevisiae (strain ATCC 204508 / S288c) (Baker's yeast), this protein is 6-phosphogluconolactonase 4.